The following is a 184-amino-acid chain: GTP cyclohydrolase 1 (184 aa).

Zn(2+) contacts are provided by Cys-75, His-78, and Cys-146.

The protein belongs to the GTP cyclohydrolase I family. Homomer.

It catalyses the reaction GTP + H2O = 7,8-dihydroneopterin 3'-triphosphate + formate + H(+). It participates in cofactor biosynthesis; 7,8-dihydroneopterin triphosphate biosynthesis; 7,8-dihydroneopterin triphosphate from GTP: step 1/1. In Finegoldia magna (strain ATCC 29328 / DSM 20472 / WAL 2508) (Peptostreptococcus magnus), this protein is GTP cyclohydrolase 1.